The primary structure comprises 346 residues: S-adenosylmethionine:tRNA ribosyltransferase-isomerase (346 aa).

Belongs to the QueA family. In terms of assembly, monomer.

The protein resides in the cytoplasm. The enzyme catalyses 7-aminomethyl-7-carbaguanosine(34) in tRNA + S-adenosyl-L-methionine = epoxyqueuosine(34) in tRNA + adenine + L-methionine + 2 H(+). Its pathway is tRNA modification; tRNA-queuosine biosynthesis. Functionally, transfers and isomerizes the ribose moiety from AdoMet to the 7-aminomethyl group of 7-deazaguanine (preQ1-tRNA) to give epoxyqueuosine (oQ-tRNA). This chain is S-adenosylmethionine:tRNA ribosyltransferase-isomerase, found in Lactococcus lactis subsp. cremoris (strain MG1363).